The primary structure comprises 116 residues: Ribonuclease P protein component (116 aa).

Belongs to the RnpA family. Consists of a catalytic RNA component (M1 or rnpB) and a protein subunit.

The catalysed reaction is Endonucleolytic cleavage of RNA, removing 5'-extranucleotides from tRNA precursor.. RNaseP catalyzes the removal of the 5'-leader sequence from pre-tRNA to produce the mature 5'-terminus. It can also cleave other RNA substrates such as 4.5S RNA. The protein component plays an auxiliary but essential role in vivo by binding to the 5'-leader sequence and broadening the substrate specificity of the ribozyme. The protein is Ribonuclease P protein component of Pseudanabaena sp. (strain PCC 6903).